The following is an 857-amino-acid chain: Cation/H(+) antiporter 25 (857 aa).

The next 11 helical transmembrane spans lie at 65–85 (FSTF…VYVL), 93–110 (RIVC…SMLG), 122–142 (PIAN…FFFL), 161–181 (YIAA…GAAL), 194–214 (SIGG…YTVL), 227–247 (FAMS…VLFE), 259–279 (YSVI…LLVV), 313–333 (FLTD…GLVV), 385–405 (IYMS…AALF), 413–435 (SLTL…LHWI), and 447–467 (VMVL…SFLY). Ser-855 is modified (phosphoserine).

The protein belongs to the monovalent cation:proton antiporter 2 (CPA2) transporter (TC 2.A.37) family. CHX (TC 2.A.37.4) subfamily. In terms of tissue distribution, specifically expressed in pollen.

The protein localises to the membrane. Functionally, may operate as a cation/H(+) antiporter. This is Cation/H(+) antiporter 25 (CHX25) from Arabidopsis thaliana (Mouse-ear cress).